The chain runs to 170 residues: Large ribosomal subunit protein bL17 (170 aa).

Over residues 124-134 (AAEAPKAAKAA) the composition is skewed to low complexity. Residues 124–170 (AAEAPKAAKAAPVKEAKPAAEEAPAKPKRTRKPKADEADAEAAKEEN) are disordered. 2 stretches are compositionally biased toward basic and acidic residues: residues 135–148 (PVKEAKPAAEEAPA) and 156–170 (PKADEADAEAAKEEN).

Belongs to the bacterial ribosomal protein bL17 family. As to quaternary structure, part of the 50S ribosomal subunit. Contacts protein L32.

This chain is Large ribosomal subunit protein bL17, found in Desulfovibrio desulfuricans (strain ATCC 27774 / DSM 6949 / MB).